Consider the following 363-residue polypeptide: UDP-N-acetylglucosamine--N-acetylmuramyl-(pentapeptide) pyrophosphoryl-undecaprenol N-acetylglucosamine transferase (363 aa).

UDP-N-acetyl-alpha-D-glucosamine contacts are provided by residues 7–9, asparagine 125, serine 196, isoleucine 251, and glutamine 296; that span reads TGG.

Belongs to the glycosyltransferase 28 family. MurG subfamily.

It localises to the cell membrane. It catalyses the reaction Mur2Ac(oyl-L-Ala-gamma-D-Glu-L-Lys-D-Ala-D-Ala)-di-trans,octa-cis-undecaprenyl diphosphate + UDP-N-acetyl-alpha-D-glucosamine = beta-D-GlcNAc-(1-&gt;4)-Mur2Ac(oyl-L-Ala-gamma-D-Glu-L-Lys-D-Ala-D-Ala)-di-trans,octa-cis-undecaprenyl diphosphate + UDP + H(+). Its pathway is cell wall biogenesis; peptidoglycan biosynthesis. Functionally, cell wall formation. Catalyzes the transfer of a GlcNAc subunit on undecaprenyl-pyrophosphoryl-MurNAc-pentapeptide (lipid intermediate I) to form undecaprenyl-pyrophosphoryl-MurNAc-(pentapeptide)GlcNAc (lipid intermediate II). The sequence is that of UDP-N-acetylglucosamine--N-acetylmuramyl-(pentapeptide) pyrophosphoryl-undecaprenol N-acetylglucosamine transferase from Latilactobacillus sakei subsp. sakei (strain 23K) (Lactobacillus sakei subsp. sakei).